Consider the following 129-residue polypeptide: 3-aminoacrylate deaminase RutC (129 aa).

Belongs to the RutC family.

It carries out the reaction (Z)-3-aminoacrylate + H2O + H(+) = 3-oxopropanoate + NH4(+). Its function is as follows. Involved in pyrimidine catabolism. Catalyzes the deamination of 3-aminoacrylate to malonic semialdehyde, a reaction that can also occur spontaneously. RutC may facilitate the reaction and modulate the metabolic fitness, rather than catalyzing essential functions. The protein is 3-aminoacrylate deaminase RutC of Caulobacter segnis (strain ATCC 21756 / DSM 7131 / JCM 7823 / NBRC 15250 / LMG 17158 / TK0059) (Mycoplana segnis).